A 549-amino-acid polypeptide reads, in one-letter code: MKNINPTHTHAWKSLEAHKAELSNITIQDLFKQEKNRFDDYSLTFNNQILIDFSKNNINQTTLSHLRQLAQECALDSAKEAMFTGEKINRTENRAVLHTALRNRTNTPVLVDGKDVMPEVNAVLAKMKDFCQRIISGEWKGYTGKAITDVVNIGIGGSDLGPYMVTEALRPYKNHLNMHFVSNVDGTHIAETLKKVNPETTLFLVASKTFTTQETMTNAQSARDWLLKAAKDESAVAKHFAALSTNAKDVEKFGIDTNNMFEFWDWVGGRYSLWSAIGLSIALSIGFENFEALLNGAHEMDKHFLSTPIEQNIPTTLALVGLWNTNFLGAQTEAILPYDQYLHRFAAYFQQGNMESNGKYVDRDGNVIKNYQTGPIIWGEPGTNGQHAFYQLIHQGTTLIPCDFIAPAQRHNPLADHHNKLLSNFFAQTEALAFGKTKEEVEAEFVKAGKSLDDVKNIVPFKVFTGNKPTNSILVQKITPFTLGALIAMYEHKIFVQGVIFNIFSFDQWGVELGKQLANRILPELTDSEKVASHDSSTNGLINQFKAWR.

Residue Glu-355 is the Proton donor of the active site. Active-site residues include His-387 and Lys-515.

It belongs to the GPI family.

The protein localises to the cytoplasm. It catalyses the reaction alpha-D-glucose 6-phosphate = beta-D-fructose 6-phosphate. It participates in carbohydrate biosynthesis; gluconeogenesis. The protein operates within carbohydrate degradation; glycolysis; D-glyceraldehyde 3-phosphate and glycerone phosphate from D-glucose: step 2/4. Functionally, catalyzes the reversible isomerization of glucose-6-phosphate to fructose-6-phosphate. The polypeptide is Glucose-6-phosphate isomerase (Haemophilus influenzae (strain ATCC 51907 / DSM 11121 / KW20 / Rd)).